We begin with the raw amino-acid sequence, 430 residues long: Mucorpepsin (430 aa).

The first 22 residues, Met-1–Ala-22, serve as a signal peptide directing secretion. Residues Arg-23 to Glu-69 constitute a propeptide, activation peptide. A Peptidase A1 domain is found at Tyr-89–Ala-421. Asp-107 is a catalytic residue. Cysteines 120 and 126 form a disulfide. Residues Asn-148 and Asn-257 are each glycosylated (N-linked (GlcNAc...) asparagine). The active site involves Asp-306. Cys-341 and Cys-385 are disulfide-bonded.

This sequence belongs to the peptidase A1 family.

The enzyme catalyses Hydrolysis of proteins, favoring hydrophobic residues at P1 and P1'. Clots milk. Does not accept Lys at P1, and hence does not activate trypsinogen.. Functionally, this enzyme, capable of clotting milk is frequently used for cheese production. This chain is Mucorpepsin, found in Rhizomucor miehei.